The primary structure comprises 206 residues: GTP cyclohydrolase 1 (206 aa).

Zn(2+)-binding residues include C95, H98, and C166.

It belongs to the GTP cyclohydrolase I family. In terms of assembly, toroid-shaped homodecamer, composed of two pentamers of five dimers.

It catalyses the reaction GTP + H2O = 7,8-dihydroneopterin 3'-triphosphate + formate + H(+). It participates in cofactor biosynthesis; 7,8-dihydroneopterin triphosphate biosynthesis; 7,8-dihydroneopterin triphosphate from GTP: step 1/1. This is GTP cyclohydrolase 1 from Bartonella bacilliformis (strain ATCC 35685 / KC583 / Herrer 020/F12,63).